A 402-amino-acid chain; its full sequence is Probable glutamate 5-kinase (402 aa).

Substrate contacts are provided by Ser58, Asp145, and Asn157. ATP is bound by residues Thr177 to Asp178 and Thr218 to Lys224. In terms of domain architecture, PUA spans His295–Asn373.

Belongs to the glutamate 5-kinase family.

It localises to the cytoplasm. The catalysed reaction is L-glutamate + ATP = L-glutamyl 5-phosphate + ADP. It participates in amino-acid biosynthesis; L-proline biosynthesis; L-glutamate 5-semialdehyde from L-glutamate: step 1/2. Its function is as follows. Catalyzes the transfer of a phosphate group to glutamate to form glutamate 5-phosphate which rapidly cyclizes to 5-oxoproline. This Schizosaccharomyces pombe (strain 972 / ATCC 24843) (Fission yeast) protein is Probable glutamate 5-kinase.